Here is a 248-residue protein sequence, read N- to C-terminus: Indole-3-glycerol phosphate synthase (248 aa).

Belongs to the TrpC family. Monomer.

It carries out the reaction 1-(2-carboxyphenylamino)-1-deoxy-D-ribulose 5-phosphate + H(+) = (1S,2R)-1-C-(indol-3-yl)glycerol 3-phosphate + CO2 + H2O. It participates in amino-acid biosynthesis; L-tryptophan biosynthesis; L-tryptophan from chorismate: step 4/5. The protein is Indole-3-glycerol phosphate synthase (trpC) of Saccharolobus solfataricus (strain ATCC 35092 / DSM 1617 / JCM 11322 / P2) (Sulfolobus solfataricus).